The sequence spans 147 residues: Large ribosomal subunit protein uL15 (147 aa).

The segment covering 1–13 (MELHSLKAAEGSR) has biased composition (basic and acidic residues). The disordered stretch occupies residues 1–57 (MELHSLKAAEGSRKVRNRVGRGTSSGNGKTSGRGQKGQKSRSGGGVRPGFEGGQTEL). Gly residues-rich tracts occupy residues 23 to 35 (TSSG…GRGQ) and 42 to 52 (SGGGVRPGFEG).

The protein belongs to the universal ribosomal protein uL15 family. In terms of assembly, part of the 50S ribosomal subunit.

Functionally, binds to the 23S rRNA. The chain is Large ribosomal subunit protein uL15 from Lactococcus lactis subsp. lactis (strain IL1403) (Streptococcus lactis).